The primary structure comprises 87 residues: Phosphoribosyl-ATP pyrophosphatase (87 aa).

It belongs to the PRA-PH family.

Its subcellular location is the cytoplasm. The catalysed reaction is 1-(5-phospho-beta-D-ribosyl)-ATP + H2O = 1-(5-phospho-beta-D-ribosyl)-5'-AMP + diphosphate + H(+). Its pathway is amino-acid biosynthesis; L-histidine biosynthesis; L-histidine from 5-phospho-alpha-D-ribose 1-diphosphate: step 2/9. The chain is Phosphoribosyl-ATP pyrophosphatase (hisE) from Corynebacterium glutamicum (strain ATCC 13032 / DSM 20300 / JCM 1318 / BCRC 11384 / CCUG 27702 / LMG 3730 / NBRC 12168 / NCIMB 10025 / NRRL B-2784 / 534).